The chain runs to 126 residues: Glycine cleavage system H protein (126 aa).

A Lipoyl-binding domain is found at 22–103 (KAYIGITDYA…PYGSWMALVE (82 aa)). Lys63 is subject to N6-lipoyllysine.

Belongs to the GcvH family. As to quaternary structure, the glycine cleavage system is composed of four proteins: P, T, L and H. (R)-lipoate serves as cofactor.

In terms of biological role, the glycine cleavage system catalyzes the degradation of glycine. The H protein shuttles the methylamine group of glycine from the P protein to the T protein. This is Glycine cleavage system H protein from Thermoanaerobacter pseudethanolicus (strain ATCC 33223 / 39E) (Clostridium thermohydrosulfuricum).